The following is a 342-amino-acid chain: Pre-mRNA-splicing factor 18 (342 aa).

Met1 carries the post-translational modification N-acetylmethionine.

The protein belongs to the PRP18 family. In terms of assembly, heterodimer with PPIH. Interacts with PRPF4 and with the spliceosome. Part of a complex containing U4/U6 snRNPs.

Its subcellular location is the nucleus speckle. In terms of biological role, participates in the second step of pre-mRNA splicing. The protein is Pre-mRNA-splicing factor 18 (Prpf18) of Mus musculus (Mouse).